Reading from the N-terminus, the 235-residue chain is 2-C-methyl-D-erythritol 4-phosphate cytidylyltransferase (235 aa).

This sequence belongs to the IspD/TarI cytidylyltransferase family. IspD subfamily.

The enzyme catalyses 2-C-methyl-D-erythritol 4-phosphate + CTP + H(+) = 4-CDP-2-C-methyl-D-erythritol + diphosphate. Its pathway is isoprenoid biosynthesis; isopentenyl diphosphate biosynthesis via DXP pathway; isopentenyl diphosphate from 1-deoxy-D-xylulose 5-phosphate: step 2/6. Catalyzes the formation of 4-diphosphocytidyl-2-C-methyl-D-erythritol from CTP and 2-C-methyl-D-erythritol 4-phosphate (MEP). The chain is 2-C-methyl-D-erythritol 4-phosphate cytidylyltransferase from Pseudomonas fluorescens (strain SBW25).